Reading from the N-terminus, the 823-residue chain is Protein FAM83G (823 aa).

Alanine 2 is modified (N-acetylalanine). The interval 2–312 (AFSQVQCLDD…LYLMSHSVSL (311 aa)) is DUF1669. Phosphoserine is present on serine 4. Residues 75–108 (DPGSEDPRGTGPSQGPEDNGVGDGEEASGADGVP) are disordered. 3 positions are modified to phosphoserine: serine 124, serine 127, and serine 356. Residues 450-823 (RDTSQASAQH…AQAPRDRKDP (374 aa)) are disordered. The segment covering 452 to 465 (TSQASAQHQLWKQS) has biased composition (polar residues). Pro residues predominate over residues 497-508 (DPEPLPPVPKPR). Basic and acidic residues predominate over residues 529 to 543 (LPKEEAPQNGTDHRL). Positions 578–587 (GVEEEDDDDY) are enriched in acidic residues. A phosphoserine mark is found at serine 610, serine 614, serine 616, serine 650, and serine 666. Composition is skewed to basic and acidic residues over residues 672–681 (RGREEADALK) and 809–823 (DSKR…RKDP).

Belongs to the FAM83 family. Interacts with SMAD1 (via MH2 domain); in a SMAD4-independent manner. Directly interacts (via DUF1669) with casein kinase isoforms CSNK1A1 and CSNK1A1L. Post-translationally, phosphorylated in vitro by CSNK1A1. BMP signaling induces the phosphorylation by BMPR1A at Ser-610, Ser-614 and Ser-616. Phosphorylation at Ser-610 is necessary for the activation of SMAD4-independent BMP target genes such as NEDD9 and ASNS.

It localises to the cytoplasm. The protein localises to the cytosol. It is found in the nucleus. Functionally, substrate for type I BMP receptor kinase involved in regulation of some target genes of the BMP signaling pathway. Also regulates the expression of several non-BMP target genes, suggesting a role in other signaling pathways. The sequence is that of Protein FAM83G (FAM83G) from Homo sapiens (Human).